Here is a 231-residue protein sequence, read N- to C-terminus: MKFTFVTLFQNIVEGYFNDSILKRAIQKEILEVEYLNPRDFSDSRHNKVDDSAVGGGAGMVMNPQPLFDALDELKRVDSEVHILFLTPVAKSFKQNDAKRLSKKPHIAFVSGRYEGIDERVIEKYADEVFSIGDYILTGGELPSLVICDAISRNVDGVLGNSDSLSVESFETELLEAPSFSKPEIYKNISVPSEYLKGNHSKIRSLKLALSTCKTKFFRPEQLLKHKTQLH.

Residues G112 and 132–137 each bind S-adenosyl-L-methionine; that span reads IGDYIL.

This sequence belongs to the RNA methyltransferase TrmD family. Homodimer.

The protein resides in the cytoplasm. It carries out the reaction guanosine(37) in tRNA + S-adenosyl-L-methionine = N(1)-methylguanosine(37) in tRNA + S-adenosyl-L-homocysteine + H(+). Its function is as follows. Specifically methylates guanosine-37 in various tRNAs. The polypeptide is tRNA (guanine-N(1)-)-methyltransferase (Sulfurimonas denitrificans (strain ATCC 33889 / DSM 1251) (Thiomicrospira denitrificans (strain ATCC 33889 / DSM 1251))).